Here is a 398-residue protein sequence, read N- to C-terminus: uncharacterized protein (398 aa).

This sequence belongs to the class-V pyridoxal-phosphate-dependent aminotransferase family. Homodimer.

In terms of biological role, is essential for optimal growth. This is an uncharacterized protein from Mycobacterium tuberculosis (strain CDC 1551 / Oshkosh).